Reading from the N-terminus, the 210-residue chain is Stress-response A/B barrel domain-containing protein DABB1 (210 aa).

Stress-response A/B barrel domains are found at residues valine 5 to tryptophan 100 and isoleucine 116 to phenylalanine 204.

As to quaternary structure, homodimer.

It localises to the cytoplasm. The protein localises to the cytosol. Functionally, involved in defense against fungal pathogens. Possesses antifungal activity against diverse pathogenic fungi. The chain is Stress-response A/B barrel domain-containing protein DABB1 from Arabidopsis thaliana (Mouse-ear cress).